The sequence spans 602 residues: Ligand-dependent nuclear receptor corepressor-like protein (602 aa).

The tract at residues 104–124 is disordered; the sequence is PSLDSSQSTPTEELSSQGQSN. The segment covering 106-124 has biased composition (polar residues); sequence LDSSQSTPTEELSSQGQSN. Residues Lys242, Lys319, Lys340, and Lys397 each participate in a glycyl lysine isopeptide (Lys-Gly) (interchain with G-Cter in SUMO2) cross-link. Disordered regions lie at residues 495–521 and 564–602; these read TVDGTSENTEDGLDRKDSKQPRKKRGR and ERSGTLKTPPKKKLRLPDTGLYNMTDSGTGSCKNSSKPV. Residues 516–568 form the HTH psq-type domain; sequence RKKRGRYRQYDHEIMEEAIAMVMSGKMSVSKAQGIYGVPHSTLEYKVKERSGT. The segment at residues 544-564 is a DNA-binding region (H-T-H motif); sequence VSKAQGIYGVPHSTLEYKVKE. Residues 585-602 are compositionally biased toward polar residues; sequence YNMTDSGTGSCKNSSKPV.

It is found in the nucleus. In terms of biological role, may act as transcription activator that binds DNA elements with the sequence 5'-CCCTATCGATCGATCTCTACCT-3'. May play a role in spermatogenesis. This is Ligand-dependent nuclear receptor corepressor-like protein (LCORL) from Homo sapiens (Human).